The primary structure comprises 124 residues: Large ribosomal subunit protein bL12 (124 aa).

It belongs to the bacterial ribosomal protein bL12 family. In terms of assembly, homodimer. Part of the ribosomal stalk of the 50S ribosomal subunit. Forms a multimeric L10(L12)X complex, where L10 forms an elongated spine to which 2 to 4 L12 dimers bind in a sequential fashion. Binds GTP-bound translation factors.

Functionally, forms part of the ribosomal stalk which helps the ribosome interact with GTP-bound translation factors. Is thus essential for accurate translation. This Wolinella succinogenes (strain ATCC 29543 / DSM 1740 / CCUG 13145 / JCM 31913 / LMG 7466 / NCTC 11488 / FDC 602W) (Vibrio succinogenes) protein is Large ribosomal subunit protein bL12.